A 259-amino-acid chain; its full sequence is Tryptophan synthase alpha chain (259 aa).

Active-site proton acceptor residues include Glu-52 and Asp-63.

The protein belongs to the TrpA family. As to quaternary structure, tetramer of two alpha and two beta chains.

The catalysed reaction is (1S,2R)-1-C-(indol-3-yl)glycerol 3-phosphate + L-serine = D-glyceraldehyde 3-phosphate + L-tryptophan + H2O. The protein operates within amino-acid biosynthesis; L-tryptophan biosynthesis; L-tryptophan from chorismate: step 5/5. Its function is as follows. The alpha subunit is responsible for the aldol cleavage of indoleglycerol phosphate to indole and glyceraldehyde 3-phosphate. This chain is Tryptophan synthase alpha chain, found in Streptococcus gordonii (strain Challis / ATCC 35105 / BCRC 15272 / CH1 / DL1 / V288).